The chain runs to 359 residues: MNTEIKARFRVDRSDFTLDVDLSLPGRGITALFGHSGSGKTTCLRAMAGLERASAGYFALGDEVWQDESRGHFIPVHRRALGVVFQEASLFPHLSVRGNMEFGLKRKTTGTTRFSLPEIAELLGIAHLLNRPPDQLSGGERQRVAIARALLAAPKILLMDEPLAALDLKRKLEILPYLERLHSELAIPIIYVSHAPDEVARLADHLVLLDAGRVVASGALNQVLSRIDLPAAFADDAGVVIEATVAEHEVDDLTRLEFPGGAIYVSRRHEPVGTPLRCRIHARDVSLTLLPQMQSSILNCVSASVVDLAPTDTPGHVLVKLDVTGEPLLARITRRSAEKLEIRPGLALRAQIKAVALLA.

The ABC transporter domain maps to 1–236 (MNTEIKARFR…IDLPAAFADD (236 aa)). 34-41 (GHSGSGKT) contributes to the ATP binding site. The region spanning 294–359 (QSSILNCVSA…AQIKAVALLA (66 aa)) is the Mop domain.

This sequence belongs to the ABC transporter superfamily. Molybdate importer (TC 3.A.1.8) family. As to quaternary structure, the complex is composed of two ATP-binding proteins (ModC), two transmembrane proteins (ModB) and a solute-binding protein (ModA).

Its subcellular location is the cell inner membrane. It catalyses the reaction molybdate(out) + ATP + H2O = molybdate(in) + ADP + phosphate + H(+). Its function is as follows. Part of the ABC transporter complex ModABC involved in molybdenum import. Responsible for energy coupling to the transport system. This is Molybdenum import ATP-binding protein ModC from Dechloromonas aromatica (strain RCB).